A 1448-amino-acid chain; its full sequence is Protein clueless (1448 aa).

Disordered stretches follow at residues 1 to 96, 110 to 129, and 265 to 286; these read MALE…HAEK, NANV…ADGD, and RTRP…VSDP. Composition is skewed to low complexity over residues 9 to 26 and 41 to 66; these read NSNA…TKAS and NLNP…ADGP. A compositionally biased stretch (basic residues) spans 68–77; the sequence is AKKKGKKNRN. Over residues 78–88 the composition is skewed to polar residues; the sequence is KSPTEPTTEAV. Position 270 is a phosphoserine (Ser270). Residues 424 to 666 enclose the Clu domain; that stretch reads RAEDAFSSKL…RTFPPDVNFL (243 aa). Disordered stretches follow at residues 726-773, 958-1010, and 1414-1448; these read SEKS…SGEA, AVSS…SASD, and GEAE…ATSS. Positions 748–769 are enriched in basic and acidic residues; that stretch reads GAEKPDDKEKKNEEEEKKERST. The segment covering 966-981 has biased composition (basic residues); sequence KKRGNGGKHNKHKSSK. Residues 986 to 1007 are compositionally biased toward low complexity; the sequence is QQQQQTTGNQNGSSSGSSNSSS. The span at 1419–1429 shows a compositional bias: basic and acidic residues; the sequence is AVSKDIKEQPE.

Belongs to the CLU family.

The protein localises to the cytoplasm. In terms of biological role, mRNA-binding protein involved in proper cytoplasmic distribution of mitochondria. The sequence is that of Protein clueless from Drosophila melanogaster (Fruit fly).